The chain runs to 141 residues: Large ribosomal subunit protein uL11B (141 aa).

The protein belongs to the universal ribosomal protein uL11 family. In terms of assembly, part of the ribosomal stalk of the 50S ribosomal subunit. Interacts with L10 and the large rRNA to form the base of the stalk. L10 forms an elongated spine to which L12 dimers bind in a sequential fashion forming a multimeric L10(L12)X complex. In terms of processing, one or more lysine residues are methylated.

In terms of biological role, forms part of the ribosomal stalk which helps the ribosome interact with GTP-bound translation factors. This Halalkalibacterium halodurans (strain ATCC BAA-125 / DSM 18197 / FERM 7344 / JCM 9153 / C-125) (Bacillus halodurans) protein is Large ribosomal subunit protein uL11B.